The primary structure comprises 711 residues: Methionine--tRNA ligase (711 aa).

A 'HIGH' region motif is present at residues 15 to 25 (PYTNGPIHIGH). Residues C147, C150, C160, and C163 each contribute to the Zn(2+) site. The short motif at 336–340 (KLSTS) is the 'KMSKS' region element. Residue T339 participates in ATP binding. Residues 610 to 711 (DFAKMDIRIG…ADAPNGATVN (102 aa)) form the tRNA-binding domain.

It belongs to the class-I aminoacyl-tRNA synthetase family. MetG type 1 subfamily. Homodimer. Requires Zn(2+) as cofactor.

The protein resides in the cytoplasm. The catalysed reaction is tRNA(Met) + L-methionine + ATP = L-methionyl-tRNA(Met) + AMP + diphosphate. In terms of biological role, is required not only for elongation of protein synthesis but also for the initiation of all mRNA translation through initiator tRNA(fMet) aminoacylation. The sequence is that of Methionine--tRNA ligase from Flavobacterium johnsoniae (strain ATCC 17061 / DSM 2064 / JCM 8514 / BCRC 14874 / CCUG 350202 / NBRC 14942 / NCIMB 11054 / UW101) (Cytophaga johnsonae).